Consider the following 142-residue polypeptide: Type II secretion system core protein G (142 aa).

A propeptide spans 1-8 (MQRRQQSG) (leader sequence). Phe9 carries the N-methylphenylalanine modification. A helical transmembrane segment spans residues 9 to 29 (FTLIEIMVVVVILGILAALVV). The disordered stretch occupies residues 121–142 (SLGADGKEGGSDNDADIGNWDN).

Belongs to the GSP G family. In terms of assembly, type II secretion system is composed of four main components: the outer membrane complex, the inner membrane complex, the cytoplasmic secretion ATPase and the periplasm-spanning pseudopilus. Forms homomultimers. Interacts with pseudopilin tip ternary complex made of XcpX, XcpU, XcpV and XcpW. Interacts with PilA. Post-translationally, cleaved by the prepilin peptidase. Methylated by prepilin peptidase at the amino group of the N-terminal phenylalanine once the leader sequence is cleaved.

The protein localises to the cell inner membrane. Its function is as follows. Core component of the type II secretion system required for the energy-dependent secretion of extracellular factors such as proteases and toxins from the periplasm. Pseudopilin (pilin-like) protein that polymerizes to form the pseudopilus. Further polymerization triggers pseudopilus growth. Type II pseudopilus confers increased bacterial adhesive capabilities. The polypeptide is Type II secretion system core protein G (xcpT) (Pseudomonas aeruginosa (strain ATCC 15692 / DSM 22644 / CIP 104116 / JCM 14847 / LMG 12228 / 1C / PRS 101 / PAO1)).